The following is a 163-amino-acid chain: Bacterial microcompartment assembly protein PduM (163 aa).

It belongs to the PduM family. As to quaternary structure, interacts with shell protein PduK.

It is found in the bacterial microcompartment. It functions in the pathway polyol metabolism; 1,2-propanediol degradation. In terms of biological role, plays an essential role in assembly and/or stability of the bacterial microcompartment (BMC) dedicated to 1,2-propanediol (1,2-PD) degradation. Functionally, expression of a cosmid containing the full 21-gene pdu operon in E.coli allows E.coli to grow on 1,2-propanediol (1,2-PD) with the appearance of bacterial microcompartments (BMC) in its cytoplasm. Its function is as follows. The 1,2-PD-specific bacterial microcompartment (BMC) concentrates low levels of 1,2-PD catabolic enzymes, concentrates volatile reaction intermediates thus enhancing pathway flux and keeps the level of toxic, mutagenic propionaldehyde low. The protein is Bacterial microcompartment assembly protein PduM of Citrobacter freundii.